Reading from the N-terminus, the 141-residue chain is Large ribosomal subunit protein uL16 (141 aa).

The span at 1-17 shows a compositional bias: basic residues; sequence MLMPKRTKFRKQMKGRN. The tract at residues 1 to 22 is disordered; that stretch reads MLMPKRTKFRKQMKGRNRGYAT.

Belongs to the universal ribosomal protein uL16 family. In terms of assembly, part of the 50S ribosomal subunit.

In terms of biological role, binds 23S rRNA and is also seen to make contacts with the A and possibly P site tRNAs. The polypeptide is Large ribosomal subunit protein uL16 (Campylobacter curvus (strain 525.92)).